The sequence spans 555 residues: Glutamine--tRNA ligase (555 aa).

The short motif at 34–44 (PEPNGYLHIGH) is the 'HIGH' region element. ATP contacts are provided by residues 35-37 (EPN) and 41-47 (HIGHAKS). Residues aspartate 67 and tyrosine 212 each contribute to the L-glutamine site. Residues threonine 231, 261-262 (RL), and 269-271 (MSK) each bind ATP. The 'KMSKS' region signature appears at 268 to 272 (VMSKR). Positions 317-324 (TKQDNTIE) are interaction with tRNA.

The protein belongs to the class-I aminoacyl-tRNA synthetase family. Monomer.

Its subcellular location is the cytoplasm. It catalyses the reaction tRNA(Gln) + L-glutamine + ATP = L-glutaminyl-tRNA(Gln) + AMP + diphosphate. The sequence is that of Glutamine--tRNA ligase from Enterobacter sp. (strain 638).